Reading from the N-terminus, the 821-residue chain is Fibroblast growth factor receptor 2 (821 aa).

A signal peptide spans 1-21 (MVSWGRFICLVVVTMATLSLA). Residues 22-377 (RPSFSLVEDT…EITASPDYLE (356 aa)) are Extracellular-facing. Residues 25 to 125 (FSLVEDTTLE…ETWYFMVNVT (101 aa)) enclose the Ig-like C2-type 1 domain. Cys62 and Cys107 are disulfide-bonded. 2 N-linked (GlcNAc...) asparagine glycosylation sites follow: Asn83 and Asn123. Over residues 131 to 144 (GDDEDDTDGAEDFV) the composition is skewed to acidic residues. A disordered region spans residues 131-151 (GDDEDDTDGAEDFVSENSNNK). Ig-like C2-type domains are found at residues 154-247 (PYWT…YHLD) and 256-358 (PILQ…AWLT). Residues 161 to 178 (KMEKRLHAVPAANTVKFR) form a heparin-binding region. Cysteines 179 and 231 form a disulfide. Residues Asn228, Asn241, Asn265, Asn297, Asn318, and Asn331 are each glycosylated (N-linked (GlcNAc...) asparagine). Cys278 and Cys342 are joined by a disulfide. Residues 378–398 (IAIYCIGVFLIACMVVTVILC) traverse the membrane as a helical segment. At 399 to 821 (RMKNTTKKPD…YPHINGSVKT (423 aa)) the chain is on the cytoplasmic side. The residue at position 466 (Tyr466) is a Phosphotyrosine; by autocatalysis. Residues 481–770 (LTLGKPLGEG…LTLTTNEEYL (290 aa)) enclose the Protein kinase domain. ATP is bound by residues 487 to 495 (LGEGCFGQV), Lys517, 565 to 567 (EYA), and Asn571. Phosphotyrosine; by autocatalysis occurs at positions 586 and 588. Residue Asp626 is the Proton acceptor of the active site. 3 positions are modified to phosphotyrosine; by autocatalysis: Tyr656, Tyr657, and Tyr769. The residue at position 780 (Ser780) is a Phosphoserine.

This sequence belongs to the protein kinase superfamily. Tyr protein kinase family. Fibroblast growth factor receptor subfamily. In terms of assembly, monomer. Homodimer after ligand binding. Interacts predominantly with FGF1 and FGF2, but can also interact with FGF3, FGF4, FGF6, FGF7, FGF8, FGF9, FGF10, FGF17, FGF18 and FGF22 (in vitro). Ligand specificity is determined by tissue-specific expression of isoforms, and differences in the third Ig-like domain are crucial for ligand specificity. Isoform 1 has high affinity for FGF1 and FGF2, but low affinity for FGF7. Isoform 3 has high affinity for FGF1 and FGF7, and has much higher affinity for FGF7 than isoform 1 (in vitro). Affinity for fibroblast growth factors (FGFs) is increased by heparan sulfate glycosaminoglycans that function as coreceptors. Likewise, KLB increases the affinity for FGF19 and FGF21. Interacts with PLCG1, GRB2 and PAK4. Interacts with FLRT2. Post-translationally, autophosphorylated. Binding of FGF family members together with heparan sulfate proteoglycan or heparin promotes receptor dimerization and autophosphorylation on several tyrosine residues. Autophosphorylation occurs in trans between the two FGFR molecules present in the dimer. Phosphorylation at Tyr-769 is essential for interaction with PLCG1. In terms of processing, N-glycosylated in the endoplasmic reticulum. The N-glycan chains undergo further maturation to an Endo H-resistant form in the Golgi apparatus. Ubiquitinated. FGFR2 is rapidly ubiquitinated after autophosphorylation, leading to internalization and degradation. Subject to degradation both in lysosomes and by the proteasome.

It localises to the cell membrane. It is found in the golgi apparatus. The protein resides in the cytoplasmic vesicle. Its subcellular location is the secreted. The enzyme catalyses L-tyrosyl-[protein] + ATP = O-phospho-L-tyrosyl-[protein] + ADP + H(+). Its activity is regulated as follows. Present in an inactive conformation in the absence of bound ligand. Ligand binding leads to dimerization and activation by autophosphorylation on tyrosine residues. Inhibited by ARQ 523 and ARQ 069; these compounds maintain the kinase in an inactive conformation and inhibit autophosphorylation. Tyrosine-protein kinase that acts as a cell-surface receptor for fibroblast growth factors and plays an essential role in the regulation of cell proliferation, differentiation, migration and apoptosis, and in the regulation of embryonic development. Required for normal embryonic patterning, trophoblast function, limb bud development, lung morphogenesis, osteogenesis and skin development. Plays an essential role in the regulation of osteoblast differentiation, proliferation and apoptosis, and is required for normal skeleton development. Promotes cell proliferation in keratinocytes and immature osteoblasts, but promotes apoptosis in differentiated osteoblasts. Phosphorylates PLCG1, FRS2 and PAK4. Ligand binding leads to the activation of several signaling cascades. Activation of PLCG1 leads to the production of the cellular signaling molecules diacylglycerol and inositol 1,4,5-trisphosphate. Phosphorylation of FRS2 triggers recruitment of GRB2, GAB1, PIK3R1 and SOS1, and mediates activation of RAS, MAPK1/ERK2, MAPK3/ERK1 and the MAP kinase signaling pathway, as well as of the AKT1 signaling pathway. FGFR2 signaling is down-regulated by ubiquitination, internalization and degradation. Mutations that lead to constitutive kinase activation or impair normal FGFR2 maturation, internalization and degradation lead to aberrant signaling. Over-expressed FGFR2 promotes activation of STAT1. The sequence is that of Fibroblast growth factor receptor 2 (FGFR2) from Homo sapiens (Human).